Reading from the N-terminus, the 537-residue chain is Phosphoenolpyruvate carboxykinase (ATP) (537 aa).

The substrate site is built by R61, Y195, and K201. ATP is bound by residues K201, H220, and 236–244 (GLSGTGKTT). Mn(2+) is bound by residues K201 and H220. D257 provides a ligand contact to Mn(2+). 3 residues coordinate ATP: E285, R323, and T448. R323 provides a ligand contact to substrate.

This sequence belongs to the phosphoenolpyruvate carboxykinase (ATP) family. Mn(2+) is required as a cofactor.

The protein resides in the cytoplasm. It carries out the reaction oxaloacetate + ATP = phosphoenolpyruvate + ADP + CO2. Its pathway is carbohydrate biosynthesis; gluconeogenesis. Functionally, involved in the gluconeogenesis. Catalyzes the conversion of oxaloacetate (OAA) to phosphoenolpyruvate (PEP) through direct phosphoryl transfer between the nucleoside triphosphate and OAA. The protein is Phosphoenolpyruvate carboxykinase (ATP) of Parvibaculum lavamentivorans (strain DS-1 / DSM 13023 / NCIMB 13966).